The chain runs to 483 residues: General transcription factor IIH subunit 4 (483 aa).

The tract at residues 93–117 (PQQQQSSQQSSSQQQQQQQQQQQQT) is disordered. Over residues 94–116 (QQQQSSQQSSSQQQQQQQQQQQQ) the composition is skewed to low complexity.

This sequence belongs to the TFB2 family. As to quaternary structure, component of the 7-subunit TFIIH core complex composed of XPB/repB, XPD/repD, gtf2h1, gtf2h2, gtf2h3, gtf2h4 and gtf2h5, which is active in NER. The core complex associates with the 3-subunit CDK-activating kinase (CAK) module composed of cycH/cyclin H, cdk7 and mnat1 to form the 10-subunit holoenzyme (holo-TFIIH) active in transcription.

Its subcellular location is the nucleus. Component of the general transcription and DNA repair factor IIH (TFIIH) core complex, which is involved in general and transcription-coupled nucleotide excision repair (NER) of damaged DNA and, when complexed to CAK, in RNA transcription by RNA polymerase II. In NER, TFIIH acts by opening DNA around the lesion to allow the excision of the damaged oligonucleotide and its replacement by a new DNA fragment. In transcription, TFIIH has an essential role in transcription initiation. When the pre-initiation complex (PIC) has been established, TFIIH is required for promoter opening and promoter escape. Phosphorylation of the C-terminal tail (CTD) of the largest subunit of RNA polymerase II by the kinase module CAK controls the initiation of transcription. This is General transcription factor IIH subunit 4 (gtf2h4) from Dictyostelium discoideum (Social amoeba).